The sequence spans 256 residues: Fumarate reductase iron-sulfur subunit (256 aa).

A 2Fe-2S ferredoxin-type domain is found at 7–97; the sequence is MNVEVLRYNP…HMRIEPLANF (91 aa). Tyr14 serves as a coordination point for a menaquinone. [2Fe-2S] cluster contacts are provided by Cys58, Cys63, Cys66, and Cys78. A 4Fe-4S ferredoxin-type domain is found at 151 to 180; the sequence is LEKYRQFSMCINCGLCYAACPQFGLNPEFL. [4Fe-4S] cluster-binding residues include Cys160, Cys163, and Cys166. Positions 170, 216, and 222 each coordinate [3Fe-4S] cluster. Residue Cys226 coordinates [4Fe-4S] cluster. A menaquinone is bound at residue 237–240; the sequence is NQGK.

The protein belongs to the succinate dehydrogenase/fumarate reductase iron-sulfur protein family. Fumarate dehydrogenase forms part of an enzyme complex containing four subunits: a flavoprotein, an iron-sulfur, and two hydrophobic anchor proteins. The cofactor is [2Fe-2S] cluster. It depends on [3Fe-4S] cluster as a cofactor. Requires [4Fe-4S] cluster as cofactor.

Its subcellular location is the cell inner membrane. It carries out the reaction a quinone + succinate = fumarate + a quinol. The enzyme catalyses a menaquinone + succinate = a menaquinol + fumarate. In Haemophilus influenzae (strain ATCC 51907 / DSM 11121 / KW20 / Rd), this protein is Fumarate reductase iron-sulfur subunit (frdB).